A 132-amino-acid polypeptide reads, in one-letter code: MCDAFVGTWKLVSSENFDDYMKEVGVGFATRKVAGMAKPTLIISVNGDVVTIKSESTFKNTEISFKLGQEFDEVTPDDRKVKSTINLDGGALVQVQNWDGKSTTIKRKLVDDKLVLECVMNGVTATRVYERA.

Residue Cys2 is modified to N-acetylcysteine. A Phosphoserine modification is found at Ser13. Tyr20 carries the post-translational modification Phosphotyrosine; by Tyr-kinases. The short motif at Lys22 to Lys32 is the Nuclear localization signal element. Residue Arg127–Tyr129 participates in a fatty acid binding.

It belongs to the calycin superfamily. Fatty-acid binding protein (FABP) family. In terms of assembly, monomer. Homodimer. Interacts with PPARG.

The protein resides in the cytoplasm. It is found in the nucleus. In terms of biological role, lipid transport protein in adipocytes. Binds both long chain fatty acids and retinoic acid. Delivers long-chain fatty acids and retinoic acid to their cognate receptors in the nucleus. The chain is Fatty acid-binding protein, adipocyte (FABP4) from Cervus elaphus (Red deer).